A 57-amino-acid polypeptide reads, in one-letter code: Large ribosomal subunit protein bL32 (57 aa).

The protein belongs to the bacterial ribosomal protein bL32 family.

The protein is Large ribosomal subunit protein bL32 of Lysinibacillus sphaericus (strain C3-41).